The chain runs to 448 residues: Cysteine--tRNA ligase (448 aa).

Cys27 serves as a coordination point for Zn(2+). Residues Pro29–Asn39 carry the 'HIGH' region motif. Zn(2+) contacts are provided by Cys210, His235, and Glu239. The short motif at Lys267–Ser271 is the 'KMSKS' region element. ATP is bound at residue Lys270.

Belongs to the class-I aminoacyl-tRNA synthetase family. Monomer. Zn(2+) is required as a cofactor.

The protein resides in the cytoplasm. It carries out the reaction tRNA(Cys) + L-cysteine + ATP = L-cysteinyl-tRNA(Cys) + AMP + diphosphate. The chain is Cysteine--tRNA ligase from Lactococcus lactis subsp. lactis (strain IL1403) (Streptococcus lactis).